Consider the following 622-residue polypeptide: Serine/threonine-protein kinase PknB (622 aa).

The Cytoplasmic segment spans residues 1–328; the sequence is MTTPPHLSDR…TESDGSIGRW (328 aa). A Protein kinase domain is found at 11–273; sequence YELGDILGFG…TAAEMRADLI (263 aa). ATP is bound by residues 17 to 25, K40, and 93 to 95; these read LGFGGMSEV and EYV. The active-site Proton acceptor is the D138. ATP-binding positions include 140–143 and D156; that span reads KPAN. N143 and D156 together coordinate Mg(2+). Phosphoserine; by autocatalysis occurs at positions 166 and 168. Residues T170, T172, and T308 each carry the phosphothreonine; by autocatalysis modification. A helical membrane pass occupies residues 329-349; that stretch reads VAVVAVLAVLTIAIVAAFNTF. The Extracellular portion of the chain corresponds to 350–622; sequence GGNTRDVQVP…DGIITLKFGQ (273 aa). 4 consecutive PASTA domains span residues 352 to 418, 419 to 486, 487 to 553, and 554 to 622; these read NTRD…NVST, GPEQ…IVGS, GPET…QVSK, and GNQF…KFGQ. Positions 381 to 404 are disordered; the sequence is RTLQKPDSTIPPDHVISTEPGANA.

It belongs to the protein kinase superfamily. Ser/Thr protein kinase family. In terms of assembly, homodimer. In terms of processing, autophosphorylated. Dephosphorylated by PstP.

It localises to the cell membrane. The catalysed reaction is L-seryl-[protein] + ATP = O-phospho-L-seryl-[protein] + ADP + H(+). The enzyme catalyses L-threonyl-[protein] + ATP = O-phospho-L-threonyl-[protein] + ADP + H(+). In terms of biological role, protein kinase that regulates many aspects of mycobacterial physiology. Is a key component of a signal transduction pathway that regulates cell growth, cell shape and cell division via phosphorylation of target proteins. This is Serine/threonine-protein kinase PknB (pknB) from Mycobacterium leprae (strain TN).